The primary structure comprises 357 residues: Tetraacyldisaccharide 4'-kinase (357 aa).

ATP is bound at residue 49-56; it reads TIGGTGKT.

Belongs to the LpxK family.

It catalyses the reaction a lipid A disaccharide + ATP = a lipid IVA + ADP + H(+). It functions in the pathway glycolipid biosynthesis; lipid IV(A) biosynthesis; lipid IV(A) from (3R)-3-hydroxytetradecanoyl-[acyl-carrier-protein] and UDP-N-acetyl-alpha-D-glucosamine: step 6/6. Its function is as follows. Transfers the gamma-phosphate of ATP to the 4'-position of a tetraacyldisaccharide 1-phosphate intermediate (termed DS-1-P) to form tetraacyldisaccharide 1,4'-bis-phosphate (lipid IVA). This chain is Tetraacyldisaccharide 4'-kinase, found in Porphyromonas gingivalis (strain ATCC 33277 / DSM 20709 / CIP 103683 / JCM 12257 / NCTC 11834 / 2561).